The chain runs to 64 residues: Sec-independent protein translocase protein TatA (64 aa).

The chain crosses the membrane as a helical span at residues 10–30 (LVLILGIALIIFGPGKLPELG).

The protein belongs to the TatA/E family. Forms a complex with TatC.

Its subcellular location is the cell membrane. Its function is as follows. Part of the twin-arginine translocation (Tat) system that transports large folded proteins containing a characteristic twin-arginine motif in their signal peptide across membranes. TatA could form the protein-conducting channel of the Tat system. The chain is Sec-independent protein translocase protein TatA from Alkaliphilus oremlandii (strain OhILAs) (Clostridium oremlandii (strain OhILAs)).